The following is a 109-amino-acid chain: Matrix protein 2 (109 aa).

The Virion surface segment spans residues 1–4 (MLEP). A helical; Signal-anchor for type III membrane protein transmembrane segment spans residues 5 to 27 (FQILSICSFILSALHFMAWTIGH). The Intravirion segment spans residues 28-109 (LNQIKRGVNM…ETVLEIEELH (82 aa)). Positions 58–83 (HSYQKEIQAKETMKEVLSDNMEVLSD) form a coiled coil.

In terms of assembly, homotetramer. In terms of processing, phosphorylated by host.

The protein resides in the virion membrane. Its subcellular location is the host cell membrane. Forms presumably a highly low-pH gated proton-selective channel. Trp-23 may function as a minimalistic gate that opens and closes the pore. When the environmental pH is lower than a threshold, the BM2 channel would be activated and selectively transport protons across the membrane from the extracellular side to the cytoplasmic side. Crucial for the uncoating process. When the virion is internalized into the endosome, the channel acidifies the virion's interior, promoting the dissociation of matrix protein 1 (M1) from the ribonucleoprotein (RNP) thus allowing the transport of the RNP from the virion into the cell's nucleus. Also plays a role in viral proteins secretory pathway. Elevates the intravesicular pH of normally acidic compartments, such as trans-Golgi network, preventing newly formed hemagglutinin from premature switching to the fusion-active conformation. Plays a crucial role in virion assembly. Expressed in the late phase of the infection. The chain is Matrix protein 2 (M) from Influenza B virus (strain B/Memphis/12/1997).